A 204-amino-acid chain; its full sequence is LexA repressor (204 aa).

The H-T-H motif DNA-binding region spans 31–51 (VREICAKVGLSSTSTVHGHLS). Residues S128 and K165 each act as for autocatalytic cleavage activity in the active site.

The protein belongs to the peptidase S24 family. In terms of assembly, homodimer.

It catalyses the reaction Hydrolysis of Ala-|-Gly bond in repressor LexA.. Its function is as follows. Represses a number of genes involved in the response to DNA damage (SOS response), including recA and lexA. In the presence of single-stranded DNA, RecA interacts with LexA causing an autocatalytic cleavage which disrupts the DNA-binding part of LexA, leading to derepression of the SOS regulon and eventually DNA repair. The chain is LexA repressor from Clostridium acetobutylicum (strain ATCC 824 / DSM 792 / JCM 1419 / IAM 19013 / LMG 5710 / NBRC 13948 / NRRL B-527 / VKM B-1787 / 2291 / W).